The sequence spans 523 residues: Putative pentatricopeptide repeat-containing protein At3g15200 (523 aa).

PPR repeat units follow at residues 142-172, 177-211, 212-242, 246-280, 281-315, 316-350, 351-385, 388-418, 420-454, and 455-489; these read SSML…MSKR, NEKT…GIDD, DLVA…RRRE, DIKA…KCRP, DVVS…RRNP, DVKI…GPDP, NVVT…GGSC, NDVT…NKCE, TSDL…GLGP, and DQRT…GMVP. The segment at 497–523 is disordered; that stretch reads LNQNKTKPRVEDKMLRSNLTSEESESD.

Belongs to the PPR family. P subfamily.

The protein is Putative pentatricopeptide repeat-containing protein At3g15200 of Arabidopsis thaliana (Mouse-ear cress).